A 206-amino-acid chain; its full sequence is Ribosomal RNA large subunit methyltransferase E (206 aa).

The S-adenosyl-L-methionine site is built by Gly-61, Trp-63, Asp-81, Asp-97, and Asp-122. Lys-162 serves as the catalytic Proton acceptor.

It belongs to the class I-like SAM-binding methyltransferase superfamily. RNA methyltransferase RlmE family.

The protein localises to the cytoplasm. It catalyses the reaction uridine(2552) in 23S rRNA + S-adenosyl-L-methionine = 2'-O-methyluridine(2552) in 23S rRNA + S-adenosyl-L-homocysteine + H(+). Specifically methylates the uridine in position 2552 of 23S rRNA at the 2'-O position of the ribose in the fully assembled 50S ribosomal subunit. This chain is Ribosomal RNA large subunit methyltransferase E, found in Neisseria meningitidis serogroup C / serotype 2a (strain ATCC 700532 / DSM 15464 / FAM18).